The chain runs to 496 residues: Pituitary adenylate cyclase-activating polypeptide type I receptor (496 aa).

The signal sequence occupies residues 1–20; it reads MARTLQLSLTALLLLPMAIA. Over 21–152 the chain is Extracellular; sequence MHSDCIFKKE…SGDQDYYYLS (132 aa). Intrachain disulfides connect C34-C63, C54-C118, and C77-C134. N-linked (GlcNAc...) asparagine glycans are attached at residues N48, N60, and N117. The interval 125 to 139 is important for ADCYAP1/PACAP ligand binding and specificity; it reads EPFPHYFDACGFDDY. The tract at residues 125–139 is important for ligand binding and specificity; that stretch reads EPFPHYFDACGFDDY. Residues 153 to 177 traverse the membrane as a helical segment; sequence VKALYTVGYSTSLVTLTTAMVILCR. At 178-187 the chain is on the cytoplasmic side; the sequence is FRKLHCTRNF. A helical membrane pass occupies residues 188 to 208; sequence IHMNLFVSFMLRAISVFIKDW. The Extracellular portion of the chain corresponds to 209–223; it reads ILYAEQDSSHCFVST. Residues 224–249 form a helical membrane-spanning segment; that stretch reads VECKAVMVFFHYCVVSNYFWLFIEGL. A disulfide bridge links C226 with C296. Topologically, residues 250-267 are cytoplasmic; the sequence is YLFTLLVETFFPERRYFY. Residues 268–290 form a helical membrane-spanning segment; sequence WYTIIGWGTPTVCVTVWAVLRLY. The Extracellular segment spans residues 291 to 302; that stretch reads FDDAGCWDMNDS. The chain crosses the membrane as a helical span at residues 303-329; it reads TALWWVIKGPVVGSIMVNFVLFIGIII. The Cytoplasmic portion of the chain corresponds to 330-347; that stretch reads ILVQKLQSPDMGGNESSI. The helical transmembrane segment at 348–402 threads the bilayer; that stretch reads YFSCVQKCYCKPQRAQQHSCKMSELSTITLRLARSTLLLIPLFGIHYTVFAFSPE. The Extracellular portion of the chain corresponds to 403-407; the sequence is NVSKR. Residues 408–431 form a helical membrane-spanning segment; that stretch reads ERLVFELGLGSFQGFVVAVLYCFL. Topologically, residues 432-496 are cytoplasmic; it reads NGEVQAEIKR…SSLPADNLAT (65 aa). S462 and S475 each carry phosphoserine.

Belongs to the G-protein coupled receptor 2 family. Interacts with maxadilan, a vasodilator peptide from Lutzomyia longipalpis saliva; the interaction results in ADCYAP1R1 activation.

The protein localises to the cell membrane. In terms of biological role, g protein-coupled receptor activated by the neuropeptide pituitary adenylate cyclase-activating polypeptide (ADCYAP1/PACAP). Binds both PACAP27 and PACAP38 bioactive peptides. Ligand binding causes a conformation change that triggers signaling via guanine nucleotide-binding proteins (G proteins) and modulates the activity of downstream effectors. Activates cAMP-dependent pathway. May regulate the release of adrenocorticotropin, luteinizing hormone, growth hormone, prolactin, epinephrine, and catecholamine. May play a role in spermatogenesis and sperm motility. Causes smooth muscle relaxation and secretion in the gastrointestinal tract. This chain is Pituitary adenylate cyclase-activating polypeptide type I receptor, found in Mus musculus (Mouse).